A 510-amino-acid polypeptide reads, in one-letter code: Arginine biosynthesis bifunctional protein ArgJ, chloroplastic (510 aa).

Residues T223, K249, E359, N505, and T510 each contribute to the substrate site.

This sequence belongs to the ArgJ family. Heterodimer of an alpha and a beta chain.

It localises to the plastid. The protein localises to the chloroplast. The enzyme catalyses N(2)-acetyl-L-ornithine + L-glutamate = N-acetyl-L-glutamate + L-ornithine. It catalyses the reaction L-glutamate + acetyl-CoA = N-acetyl-L-glutamate + CoA + H(+). The protein operates within amino-acid biosynthesis; L-arginine biosynthesis; L-ornithine and N-acetyl-L-glutamate from L-glutamate and N(2)-acetyl-L-ornithine (cyclic): step 1/1. Its pathway is amino-acid biosynthesis; L-arginine biosynthesis; N(2)-acetyl-L-ornithine from L-glutamate: step 1/4. Its function is as follows. Catalyzes two activities which are involved in the cyclic version of arginine biosynthesis: the synthesis of acetylglutamate from glutamate and acetyl-CoA, and of ornithine by transacetylation between acetylornithine and glutamate. This Vitis vinifera (Grape) protein is Arginine biosynthesis bifunctional protein ArgJ, chloroplastic.